We begin with the raw amino-acid sequence, 136 residues long: TBK1 inhibitor DP96R (136 aa).

The segment at 66–86 (NNALEKPAGANNIPEKSAGRM) is disordered.

The protein belongs to the asfivirus DP96R family.

Inhibits cGAS-STING-mediated type I IFN expression and NF-kB activation by inhibiting TBK1 and IKBKB/IKKB. Inhibits host TBK1 phosphorylation. This chain is TBK1 inhibitor DP96R, found in Ornithodoros (relapsing fever ticks).